We begin with the raw amino-acid sequence, 271 residues long: Phosphoglycerate mutase-like protein (271 aa).

Residue histidine 22 is the Tele-phosphohistidine intermediate of the active site. The active-site Proton donor/acceptor is the glutamate 134. The segment at serine 252 to glycine 271 is disordered.

The protein belongs to the phosphoglycerate mutase family. As to expression, expressed in the shoot apical meristem and meristematic zone of the root tips.

May play a role in carbohydrates metabolism. The sequence is that of Phosphoglycerate mutase-like protein from Arabidopsis thaliana (Mouse-ear cress).